Here is a 375-residue protein sequence, read N- to C-terminus: Outer membrane porin OmpD (375 aa).

The first 34 residues, 1 to 34 (MRKHAKKIIRIIKMKLKLVAVAVTSLLAAGVVNA), serve as a signal peptide directing secretion.

It belongs to the Gram-negative porin family. Homotrimer. Mixed heterotrimers with other porins are also probable.

It is found in the cell outer membrane. Functionally, forms pores that allow passive diffusion of small molecules across the outer membrane. The protein is Outer membrane porin OmpD of Salmonella typhimurium (strain SL1344).